A 388-amino-acid chain; its full sequence is Mannitol-1-phosphate 5-dehydrogenase (388 aa).

5 to 16 (AIQFGGGNIGRG) provides a ligand contact to NAD(+). Residue K213 is part of the active site.

It belongs to the mannitol dehydrogenase family. Monomer.

The enzyme catalyses D-mannitol 1-phosphate + NAD(+) = beta-D-fructose 6-phosphate + NADH + H(+). Its function is as follows. Catalyzes the NAD(H)-dependent interconversion of D-fructose 6-phosphate and D-mannitol 1-phosphate in the mannitol metabolic pathway. The chain is Mannitol-1-phosphate 5-dehydrogenase (mpdA) from Aspergillus clavatus (strain ATCC 1007 / CBS 513.65 / DSM 816 / NCTC 3887 / NRRL 1 / QM 1276 / 107).